The chain runs to 257 residues: Zinc transporter ZupT (257 aa).

3 helical membrane passes run 5-25 (LILTILAGAATFIGAFLGVLG), 32-52 (LLAFSLGFAAGIMLLISLMEM), and 61-81 (GMSPVLGYGMFIFGLLGYFGL). The Fe(2+) site is built by Asn120 and Glu123. Positions 123 and 148 each coordinate Zn(2+). The next 4 membrane-spanning stretches (helical) occupy residues 137 to 157 (LGFGIALAVALHNIPEGLAVA), 171 to 191 (ILWAGISGLAEILGGVLAWLI), 195 to 215 (MISPVVMAAIMAVVAGIMVAL), and 236 to 256 (GVLCGMSVMGFSLVLLQTAGI). Fe(2+) contacts are provided by Asn149, Glu152, and Glu181. Position 152 (Glu152) interacts with Zn(2+).

It belongs to the ZIP transporter (TC 2.A.5) family. ZupT subfamily.

It localises to the cell inner membrane. The catalysed reaction is Zn(2+)(in) = Zn(2+)(out). In terms of biological role, mediates zinc uptake. May also transport other divalent cations. The polypeptide is Zinc transporter ZupT (Escherichia coli O7:K1 (strain IAI39 / ExPEC)).